The following is a 367-amino-acid chain: Glutamate 5-kinase (367 aa).

ATP is bound at residue Lys-10. Positions 50, 137, and 149 each coordinate substrate. ATP is bound by residues 169 to 170 (TD) and 211 to 217 (TGGMGTK). In terms of domain architecture, PUA spans 275-353 (AGEITVDEGA…QQIDAILGYE (79 aa)).

The protein belongs to the glutamate 5-kinase family.

Its subcellular location is the cytoplasm. The enzyme catalyses L-glutamate + ATP = L-glutamyl 5-phosphate + ADP. Its pathway is amino-acid biosynthesis; L-proline biosynthesis; L-glutamate 5-semialdehyde from L-glutamate: step 1/2. Functionally, catalyzes the transfer of a phosphate group to glutamate to form L-glutamate 5-phosphate. The polypeptide is Glutamate 5-kinase (Citrobacter koseri (strain ATCC BAA-895 / CDC 4225-83 / SGSC4696)).